The sequence spans 356 residues: Protein RecA (356 aa).

68-75 (GPESSGKT) is an ATP binding site.

Belongs to the RecA family.

The protein resides in the cytoplasm. Can catalyze the hydrolysis of ATP in the presence of single-stranded DNA, the ATP-dependent uptake of single-stranded DNA by duplex DNA, and the ATP-dependent hybridization of homologous single-stranded DNAs. It interacts with LexA causing its activation and leading to its autocatalytic cleavage. This Clostridium botulinum (strain Alaska E43 / Type E3) protein is Protein RecA.